The primary structure comprises 608 residues: Rap1 GTPase-GDP dissociation stimulator 1 (608 aa).

2 ARM repeats span residues 89 to 131 (GLIS…DQAG) and 171 to 212 (DSLQ…NLAE). A prevents binding to prenylated RHOA region spans residues 122–171 (EGRSAVDQAGGAQIVVDHLRSLCSKTDPASEKLLTVFCGMLMNYSNEKND). An N6-acetyllysine modification is found at Lys-231. ARM repeat units follow at residues 348–391 (DGNC…NLAI), 392–432 (PVVN…MLID), and 480–520 (SKDV…LIAA).

In terms of assembly, interacts with RABL3. Interacts with RHOT1. Interacts with unprenylated RHOA; the interaction is direct. Interacts with RAP1A. Interacts with KRAS. Interacts with RAC1. Interacts with RAP1B. Preferentially interacts with unprenylated GTPases that will become geranylgeranylated. May also interact with prenylated GTPases. As to quaternary structure, interacts with prenylated RHOA; the interaction is direct and in a 1:1 stoichiometry. Interacts with RAP1A. Interacts with KRAS. Interacts with RAC1. Interacts with RAP1B. Preferentially interacts with prenylated GTPases. Post-translationally, the N-terminus is blocked. In terms of processing, forms covalent cross-links mediated by transglutaminase TGM2, between a glutamine and the epsilon-amino group of a lysine residue, forming homopolymers and heteropolymers. In terms of tissue distribution, brain.

It is found in the cytoplasm. The protein resides in the cytosol. It localises to the endoplasmic reticulum. The protein localises to the mitochondrion. Its subcellular location is the nucleus. In terms of biological role, acts as a GEF (guanine nucleotide exchange factor) for the Rho family of small GTP-binding proteins (G proteins) that stimulates the dissociation of GDP to enable subsequent binding of GTP. Additionally, appears to chaperone the processing and/or trafficking of small GTPases containing a C-terminal polybasic region independently of GEF activity. Targets include RAP1A/RAP1B, RHOA, RHOB, RHOC, RAC1 and KRAS. Regulates mitochondrial dynamics by controlling RHOT function to promote mitochondrial fission during high calcium conditions. Able to promote the Ca(2+) release from the endoplasmic reticulum via both inositol trisphosphate (Ins3P) and ryanodine sensitive receptors leading to a enhanced mitochondrial Ca(2+) uptake. Its function is as follows. Acts as a GEF (guanine nucleotide exchange factor) for unprenylated RHOA. Chaperones the entry and passage of small GTPases through the prenylation pathway. Recognizes the last amino acid in the GTPase C-terminal CAAX motif with a preference for 'Leu' over 'Met', indicating involvement in the geranylgeranylation pathway. May also recognize prenylated GTPases. Acts as a GEF (guanine nucleotide exchange factor) for prenylated RHOA. Acts as a GEF for RHOC. Chaperones the downstream trafficking and/or processing of small newly prenylated GTPases. Escorts RAC1 to the nucleus. The polypeptide is Rap1 GTPase-GDP dissociation stimulator 1 (RAP1GDS1) (Bos taurus (Bovine)).